We begin with the raw amino-acid sequence, 427 residues long: Enolase (427 aa).

Gln163 is a (2R)-2-phosphoglycerate binding site. Catalysis depends on Glu205, which acts as the Proton donor. Mg(2+)-binding residues include Asp242, Glu285, and Asp312. Residues Lys337, Arg366, Ser367, and Lys388 each coordinate (2R)-2-phosphoglycerate. Lys337 acts as the Proton acceptor in catalysis.

The protein belongs to the enolase family. It depends on Mg(2+) as a cofactor.

The protein resides in the cytoplasm. It localises to the secreted. It is found in the cell surface. It catalyses the reaction (2R)-2-phosphoglycerate = phosphoenolpyruvate + H2O. It participates in carbohydrate degradation; glycolysis; pyruvate from D-glyceraldehyde 3-phosphate: step 4/5. Catalyzes the reversible conversion of 2-phosphoglycerate (2-PG) into phosphoenolpyruvate (PEP). It is essential for the degradation of carbohydrates via glycolysis. The polypeptide is Enolase (Variovorax paradoxus (strain S110)).